Consider the following 97-residue polypeptide: Exodeoxyribonuclease 7 small subunit (97 aa).

The disordered stretch occupies residues 1–22; the sequence is MAKTASPGATPPDNGTEPLPDN.

Belongs to the XseB family. As to quaternary structure, heterooligomer composed of large and small subunits.

The protein localises to the cytoplasm. The enzyme catalyses Exonucleolytic cleavage in either 5'- to 3'- or 3'- to 5'-direction to yield nucleoside 5'-phosphates.. Functionally, bidirectionally degrades single-stranded DNA into large acid-insoluble oligonucleotides, which are then degraded further into small acid-soluble oligonucleotides. This Burkholderia ambifaria (strain MC40-6) protein is Exodeoxyribonuclease 7 small subunit.